The sequence spans 129 residues: Small ribosomal subunit protein uS11 (129 aa).

The protein belongs to the universal ribosomal protein uS11 family. As to quaternary structure, part of the 30S ribosomal subunit. Interacts with proteins S7 and S18. Binds to IF-3.

In terms of biological role, located on the platform of the 30S subunit, it bridges several disparate RNA helices of the 16S rRNA. Forms part of the Shine-Dalgarno cleft in the 70S ribosome. The protein is Small ribosomal subunit protein uS11 of Azobacteroides pseudotrichonymphae genomovar. CFP2.